A 961-amino-acid chain; its full sequence is Glycine dehydrogenase (decarboxylating) (961 aa).

Lysine 702 carries the post-translational modification N6-(pyridoxal phosphate)lysine.

This sequence belongs to the GcvP family. In terms of assembly, the glycine cleavage system is composed of four proteins: P, T, L and H. Requires pyridoxal 5'-phosphate as cofactor.

The enzyme catalyses N(6)-[(R)-lipoyl]-L-lysyl-[glycine-cleavage complex H protein] + glycine + H(+) = N(6)-[(R)-S(8)-aminomethyldihydrolipoyl]-L-lysyl-[glycine-cleavage complex H protein] + CO2. Functionally, the glycine cleavage system catalyzes the degradation of glycine. The P protein binds the alpha-amino group of glycine through its pyridoxal phosphate cofactor; CO(2) is released and the remaining methylamine moiety is then transferred to the lipoamide cofactor of the H protein. In Rhodopseudomonas palustris (strain BisA53), this protein is Glycine dehydrogenase (decarboxylating).